The primary structure comprises 453 residues: DNA repair protein RadA (453 aa).

The segment at 10 to 27 (CTECGATFPKWAGQCADC) adopts a C4-type zinc-finger fold. Residue 96–103 (GDPGIGKS) participates in ATP binding. Residues 252–256 (KNRFG) carry the RadA KNRFG motif motif. Positions 351–453 (DVFLNVVGGV…LEQALDALFE (103 aa)) are lon-protease-like.

The protein belongs to the RecA family. RadA subfamily.

Its function is as follows. DNA-dependent ATPase involved in processing of recombination intermediates, plays a role in repairing DNA breaks. Stimulates the branch migration of RecA-mediated strand transfer reactions, allowing the 3' invading strand to extend heteroduplex DNA faster. Binds ssDNA in the presence of ADP but not other nucleotides, has ATPase activity that is stimulated by ssDNA and various branched DNA structures, but inhibited by SSB. Does not have RecA's homology-searching function. The sequence is that of DNA repair protein RadA from Pseudomonas aeruginosa (strain ATCC 15692 / DSM 22644 / CIP 104116 / JCM 14847 / LMG 12228 / 1C / PRS 101 / PAO1).